A 116-amino-acid chain; its full sequence is Venom protein 54.1 (116 aa).

An N-terminal signal peptide occupies residues 1 to 19 (MNFQVFSLIFFNFVYYCSC).

In terms of processing, contains 3 disulfide bonds. As to expression, expressed by the venom gland.

It is found in the secreted. In Lychas mucronatus (Chinese swimming scorpion), this protein is Venom protein 54.1.